Reading from the N-terminus, the 124-residue chain is Large ribosomal subunit protein bL12 (124 aa).

Residues 102-116 (MSKEDAEAAKTKLEE) are compositionally biased toward basic and acidic residues. The segment at 102-124 (MSKEDAEAAKTKLEEAGASVELK) is disordered.

This sequence belongs to the bacterial ribosomal protein bL12 family. In terms of assembly, homodimer. Part of the ribosomal stalk of the 50S ribosomal subunit. Forms a multimeric L10(L12)X complex, where L10 forms an elongated spine to which 2 to 4 L12 dimers bind in a sequential fashion. Binds GTP-bound translation factors.

Its function is as follows. Forms part of the ribosomal stalk which helps the ribosome interact with GTP-bound translation factors. Is thus essential for accurate translation. This is Large ribosomal subunit protein bL12 from Chromohalobacter salexigens (strain ATCC BAA-138 / DSM 3043 / CIP 106854 / NCIMB 13768 / 1H11).